The primary structure comprises 471 residues: U1 small nuclear ribonucleoprotein 70 kDa (471 aa).

Residues 48–78 (FEDPRDAPPPTRAETREERMERKRREKIERR) form a disordered region. The span at 60–78 (AETREERMERKRREKIERR) shows a compositional bias: basic and acidic residues. Residues 92 to 205 (HNDQNAQGDA…GGGLGGTRRG (114 aa)) form a required for interaction with U1 RNA region. The region spanning 103–184 (KTLFVARVNY…RRVLVDVERG (82 aa)) is the RRM domain. The segment at 190 to 471 (WRPRRLGGGL…NGYMMEPPME (282 aa)) is disordered. Residues 195 to 204 (LGGGLGGTRR) are compositionally biased toward gly residues. Over residues 210–246 (NIRHSGRDDTSRYDERDRERERDRRERSREREKEPRE) the composition is skewed to basic and acidic residues. Over residues 247-261 (RRRSRSRERRRKSRS) the composition is skewed to basic residues. Basic and acidic residues predominate over residues 262 to 288 (REKEERKRTREKSKDKDKEKDKDNKDR). A compositionally biased stretch (basic residues) spans 289-298 (DRKRRSRSRE). The span at 299-316 (RKRERDRDREKKEERVEA) shows a compositional bias: basic and acidic residues. Residues 317 to 326 (EVPEADDAPQ) are compositionally biased toward acidic residues. The segment covering 339 to 428 (IELKQEPEEK…RSEKREERVP (90 aa)) has biased composition (basic and acidic residues).

As to quaternary structure, component of the U1 snRNP. The U1 snRNP is composed of the U1 snRNA and the 7 core Sm proteins snrpb, snrpd1, snrpd2, snrpd3, snrpe, snrpf and snrpg that assemble in a heptameric protein ring on the Sm site of the small nuclear RNA to form the core snRNP, and at least three U1 snRNP-specific proteins snrnp70/U1-70K, snrpa/U1-A and snrpc/U1-C.

It localises to the nucleus speckle. It is found in the nucleus. Its subcellular location is the nucleoplasm. Functionally, component of the spliceosomal U1 snRNP, which is essential for recognition of the pre-mRNA 5' splice-site and the subsequent assembly of the spliceosome. snrnp70 binds to the loop I region of U1-snRNA. The sequence is that of U1 small nuclear ribonucleoprotein 70 kDa (snrnp70) from Xenopus laevis (African clawed frog).